A 101-amino-acid chain; its full sequence is Urease subunit beta (101 aa).

The protein belongs to the urease beta subunit family. As to quaternary structure, heterotrimer of UreA (gamma), UreB (beta) and UreC (alpha) subunits. Three heterotrimers associate to form the active enzyme.

It is found in the cytoplasm. It carries out the reaction urea + 2 H2O + H(+) = hydrogencarbonate + 2 NH4(+). Its pathway is nitrogen metabolism; urea degradation; CO(2) and NH(3) from urea (urease route): step 1/1. The chain is Urease subunit beta from Leptothrix cholodnii (strain ATCC 51168 / LMG 8142 / SP-6) (Leptothrix discophora (strain SP-6)).